Reading from the N-terminus, the 313-residue chain is Formimidoylglutamase (313 aa).

The Mn(2+) site is built by His-130, Asp-155, His-157, Asp-159, Asp-241, and Asp-243.

The protein belongs to the arginase family. The cofactor is Mn(2+).

It carries out the reaction N-formimidoyl-L-glutamate + H2O = formamide + L-glutamate. The protein operates within amino-acid degradation; L-histidine degradation into L-glutamate; L-glutamate from N-formimidoyl-L-glutamate (hydrolase route): step 1/1. Functionally, catalyzes the conversion of N-formimidoyl-L-glutamate to L-glutamate and formamide. The polypeptide is Formimidoylglutamase (Salmonella agona (strain SL483)).